A 657-amino-acid polypeptide reads, in one-letter code: uncharacterized protein (657 aa).

Residues 1–17 (MACVLACVAVLIGAASA) form the signal peptide.

This is an uncharacterized protein from Orgyia pseudotsugata (Douglas-fir tussock moth).